We begin with the raw amino-acid sequence, 89 residues long: Small ribosomal subunit protein uS15 (89 aa).

The protein belongs to the universal ribosomal protein uS15 family. Part of the 30S ribosomal subunit. Forms a bridge to the 50S subunit in the 70S ribosome, contacting the 23S rRNA.

One of the primary rRNA binding proteins, it binds directly to 16S rRNA where it helps nucleate assembly of the platform of the 30S subunit by binding and bridging several RNA helices of the 16S rRNA. Its function is as follows. Forms an intersubunit bridge (bridge B4) with the 23S rRNA of the 50S subunit in the ribosome. In Nitrosococcus oceani (strain ATCC 19707 / BCRC 17464 / JCM 30415 / NCIMB 11848 / C-107), this protein is Small ribosomal subunit protein uS15.